Consider the following 1528-residue polypeptide: Cell surface antigen I/II (1528 aa).

The N-terminal stretch at 1 to 50 is a signal peptide; it reads MLQKCKLEGIIICNEKRLLGAAKVKSGRTLSGALLGTAILASGAGQKALA. Positions 50 to 156 are disordered; that stretch reads AEETSTTSTS…PEIKDDYSKQ (107 aa). Residues 51–68 are compositionally biased toward low complexity; the sequence is EETSTTSTSGGDTAVVGT. 2 stretches are compositionally biased toward polar residues: residues 83 to 97 and 124 to 133; these read NPSSQAETSQAQARQ and TVSQDATVNK. Residues 142–154 are compositionally biased toward basic and acidic residues; it reads ANQKEPEIKDDYS. Ag I/II A repeat units lie at residues 161–235, 236–315, 316–396, and 397–478; these read QKAT…QQAN, SDSQ…QAGN, AANE…QSGN, and AANE…KKDL. Disordered regions lie at residues 840–951 and 1459–1480; these read VPKV…VEPV and SNTVRTSTPEPKQPSPVDPKTT. Residues 855–879 show a composition bias toward basic and acidic residues; that stretch reads TKPDEPTYEVEKELVDLPVEPKYEP. Polar residues predominate over residues 1459–1468; sequence SNTVRTSTPE. The short motif at 1503 to 1507 is the LPXTG sorting signal element; that stretch reads LPATG. At Thr1506 the chain carries Pentaglycyl murein peptidoglycan amidated threonine. Residues 1507-1528 constitute a propeptide, removed by sortase; the sequence is GDSSNAYLPLLGLVSLTAGFSC.

It belongs to the antigen I/II family.

Its subcellular location is the secreted. The protein localises to the cell wall. This Streptococcus downei (Streptococcus sobrinus) protein is Cell surface antigen I/II.